We begin with the raw amino-acid sequence, 424 residues long: Kynureninase (424 aa).

Pyridoxal 5'-phosphate contacts are provided by residues leucine 106, threonine 107, 134–137 (FPSD), aspartate 219, histidine 222, and tyrosine 244. Position 245 is an N6-(pyridoxal phosphate)lysine (lysine 245). Pyridoxal 5'-phosphate is bound by residues tryptophan 274 and asparagine 302.

The protein belongs to the kynureninase family. In terms of assembly, homodimer. Pyridoxal 5'-phosphate serves as cofactor.

The enzyme catalyses L-kynurenine + H2O = anthranilate + L-alanine + H(+). It catalyses the reaction 3-hydroxy-L-kynurenine + H2O = 3-hydroxyanthranilate + L-alanine + H(+). Its pathway is amino-acid degradation; L-kynurenine degradation; L-alanine and anthranilate from L-kynurenine: step 1/1. It functions in the pathway cofactor biosynthesis; NAD(+) biosynthesis; quinolinate from L-kynurenine: step 2/3. Catalyzes the cleavage of L-kynurenine (L-Kyn) and L-3-hydroxykynurenine (L-3OHKyn) into anthranilic acid (AA) and 3-hydroxyanthranilic acid (3-OHAA), respectively. The protein is Kynureninase of Xanthomonas campestris pv. campestris (strain B100).